Here is a 380-residue protein sequence, read N- to C-terminus: Probable protein phosphatase 2C 2 (380 aa).

A PPM-type phosphatase domain is found at 122 to 376 (GYSVYCKRGK…DDISVMLIQL (255 aa)). Residues Asp158, Gly159, Asp321, and Asp367 each coordinate Mn(2+).

It belongs to the PP2C family. Mg(2+) is required as a cofactor. The cofactor is Mn(2+).

It carries out the reaction O-phospho-L-seryl-[protein] + H2O = L-seryl-[protein] + phosphate. The enzyme catalyses O-phospho-L-threonyl-[protein] + H2O = L-threonyl-[protein] + phosphate. This Arabidopsis thaliana (Mouse-ear cress) protein is Probable protein phosphatase 2C 2.